The chain runs to 1136 residues: Nucleoporin nup120 (1136 aa).

In terms of assembly, component of the npc107-120 complex which consists of nup85, nup107, nup120, nup131, nup132 and seh1. Interacts with nup107.

The protein resides in the nucleus. Functions as a component of the nuclear pore complex (NPC). NPC components, collectively referred to as nucleoporins (NUPs), can play the role of both NPC structural components and of docking or interaction partners for transiently associated nuclear transport factors. Active directional transport is assured by both, a Phe-Gly (FG) repeat affinity gradient for these transport factors across the NPC and a transport cofactor concentration gradient across the nuclear envelope. The chain is Nucleoporin nup120 (nup120) from Schizosaccharomyces pombe (strain 972 / ATCC 24843) (Fission yeast).